The primary structure comprises 230 residues: Probable methylthioribulose-1-phosphate dehydratase (230 aa).

Position 87 (Cys-87) interacts with substrate. Residues His-105 and His-107 each contribute to the Zn(2+) site. The Proton donor/acceptor role is filled by Glu-129. Position 185 (His-185) interacts with Zn(2+).

It belongs to the aldolase class II family. MtnB subfamily. Requires Zn(2+) as cofactor.

Its subcellular location is the cytoplasm. It carries out the reaction 5-(methylsulfanyl)-D-ribulose 1-phosphate = 5-methylsulfanyl-2,3-dioxopentyl phosphate + H2O. It functions in the pathway amino-acid biosynthesis; L-methionine biosynthesis via salvage pathway; L-methionine from S-methyl-5-thio-alpha-D-ribose 1-phosphate: step 2/6. In terms of biological role, catalyzes the dehydration of methylthioribulose-1-phosphate (MTRu-1-P) into 2,3-diketo-5-methylthiopentyl-1-phosphate (DK-MTP-1-P). This is Probable methylthioribulose-1-phosphate dehydratase from Drosophila grimshawi (Hawaiian fruit fly).